The sequence spans 415 residues: Glutamyl-tRNA reductase (415 aa).

Residues 49-52 (TCNR), Ser104, 109-111 (EPQ), and Gln115 contribute to the substrate site. Catalysis depends on Cys50, which acts as the Nucleophile. Residue 184–189 (GAGEMI) participates in NADP(+) binding.

It belongs to the glutamyl-tRNA reductase family. In terms of assembly, homodimer.

The catalysed reaction is (S)-4-amino-5-oxopentanoate + tRNA(Glu) + NADP(+) = L-glutamyl-tRNA(Glu) + NADPH + H(+). The protein operates within porphyrin-containing compound metabolism; protoporphyrin-IX biosynthesis; 5-aminolevulinate from L-glutamyl-tRNA(Glu): step 1/2. Its function is as follows. Catalyzes the NADPH-dependent reduction of glutamyl-tRNA(Glu) to glutamate 1-semialdehyde (GSA). In Neisseria meningitidis serogroup B (strain ATCC BAA-335 / MC58), this protein is Glutamyl-tRNA reductase.